Here is a 190-residue protein sequence, read N- to C-terminus: CASP-like protein 1U3 (190 aa).

Over 1 to 24 (MNGATVQPSYKEAGPVRYHPMHDC) the chain is Cytoplasmic. Residues 25-45 (LSLILRLLTLGATIAAIVAML) form a helical membrane-spanning segment. Residues 46–70 (KSTQTVPTLLGPHTARWKDFPAFEW) lie on the Extracellular side of the membrane. A helical membrane pass occupies residues 71–91 (FVIGNSIVLVYAALGTLAACL). The Cytoplasmic segment spans residues 92–113 (SLFTRRGPLSYTKTAWLTFLCD). The chain crosses the membrane as a helical span at residues 114 to 134 (FICSCALISAGSTALGVAWIG). Over 135 to 158 (KHGQHSAFWNAVCPTVDRFCDYVQ) the chain is Extracellular. A helical membrane pass occupies residues 159-179 (GALIATLCGFIFQALSTVIAA). Topologically, residues 180–190 (SALHNLATHRH) are cytoplasmic.

It belongs to the Casparian strip membrane proteins (CASP) family. In terms of assembly, homodimer and heterodimers.

The protein resides in the cell membrane. This chain is CASP-like protein 1U3, found in Physcomitrium patens (Spreading-leaved earth moss).